We begin with the raw amino-acid sequence, 668 residues long: DNA damage-responsive serine/threonine-protein kinase RqkA (668 aa).

The 260-residue stretch at 13-272 folds into the Protein kinase domain; it reads YELLALLGEG…SGAALAHLWA (260 aa). Residues 19-27 and lysine 42 each bind ATP; that span reads LGEGGSAQV. Residue aspartate 137 is the Proton acceptor of the active site.

Belongs to the protein kinase superfamily. Ser/Thr protein kinase family. Pyrroloquinoline quinone is required as a cofactor. Autophosphorylated.

It catalyses the reaction L-seryl-[protein] + ATP = O-phospho-L-seryl-[protein] + ADP + H(+). It carries out the reaction L-threonyl-[protein] + ATP = O-phospho-L-threonyl-[protein] + ADP + H(+). Autokinase activity is stimulated by DNA damage. Stimulated by PQQ and DNA ends in vitro. Plays an important role in radiation resistance and DNA double-strand break (DSB) repair. Involved in transcriptional regulation of genes important for bacterial stress response. Phosphorylates PprA in vitro. This Deinococcus radiodurans (strain ATCC 13939 / DSM 20539 / JCM 16871 / CCUG 27074 / LMG 4051 / NBRC 15346 / NCIMB 9279 / VKM B-1422 / R1) protein is DNA damage-responsive serine/threonine-protein kinase RqkA (rqkA).